A 155-amino-acid chain; its full sequence is Small ribosomal subunit protein uS7 (155 aa).

Belongs to the universal ribosomal protein uS7 family. In terms of assembly, part of the 30S ribosomal subunit. Contacts proteins S9 and S11.

Its function is as follows. One of the primary rRNA binding proteins, it binds directly to 16S rRNA where it nucleates assembly of the head domain of the 30S subunit. Is located at the subunit interface close to the decoding center, probably blocks exit of the E-site tRNA. The protein is Small ribosomal subunit protein uS7 of Chlorobium phaeobacteroides (strain DSM 266 / SMG 266 / 2430).